The primary structure comprises 429 residues: Trigger factor (429 aa).

Residues 163-248 (GDFVVIDFVG…IKEIKVKETP (86 aa)) enclose the PPIase FKBP-type domain.

This sequence belongs to the FKBP-type PPIase family. Tig subfamily.

It localises to the cytoplasm. It carries out the reaction [protein]-peptidylproline (omega=180) = [protein]-peptidylproline (omega=0). Its function is as follows. Involved in protein export. Acts as a chaperone by maintaining the newly synthesized protein in an open conformation. Functions as a peptidyl-prolyl cis-trans isomerase. The sequence is that of Trigger factor from Halothermothrix orenii (strain H 168 / OCM 544 / DSM 9562).